The following is an 871-amino-acid chain: Ubiquitin carboxyl-terminal hydrolase 8 (871 aa).

Positions T4–G99 constitute a DUSP domain. One can recognise a USP domain in the interval T279 to L869. The active-site Nucleophile is the C288. The segment at E615–E650 is disordered. H828 acts as the Proton acceptor in catalysis.

This sequence belongs to the peptidase C19 family.

It catalyses the reaction Thiol-dependent hydrolysis of ester, thioester, amide, peptide and isopeptide bonds formed by the C-terminal Gly of ubiquitin (a 76-residue protein attached to proteins as an intracellular targeting signal).. In terms of biological role, recognizes and hydrolyzes the peptide bond at the C-terminal Gly of ubiquitin. Involved in the processing of poly-ubiquitin precursors as well as that of ubiquitinated proteins. This Arabidopsis thaliana (Mouse-ear cress) protein is Ubiquitin carboxyl-terminal hydrolase 8 (UBP8).